We begin with the raw amino-acid sequence, 117 residues long: Large ribosomal subunit protein uL18 (117 aa).

The protein belongs to the universal ribosomal protein uL18 family. In terms of assembly, part of the 50S ribosomal subunit; part of the 5S rRNA/L5/L18/L25 subcomplex. Contacts the 5S and 23S rRNAs.

This is one of the proteins that bind and probably mediate the attachment of the 5S RNA into the large ribosomal subunit, where it forms part of the central protuberance. The polypeptide is Large ribosomal subunit protein uL18 (Buchnera aphidicola subsp. Acyrthosiphon kondoi (Acyrthosiphon kondoi symbiotic bacterium)).